Consider the following 308-residue polypeptide: Olfactory receptor 2T7 (308 aa).

Residues 1–17 (MPTLSFWVCSATPVSPG) lie on the Extracellular side of the membrane. The chain crosses the membrane as a helical span at residues 18–40 (FFALILLVFVTSIASNVVKIILI). The Cytoplasmic segment spans residues 41–51 (HIDSRLHTPMY). The chain crosses the membrane as a helical span at residues 52–74 (FLLSQLSLRDILYISTIVPKMLV). Over 75-88 (DQVMSQRAISFAGC) the chain is Extracellular. Residues cysteine 88 and cysteine 170 are joined by a disulfide bond. Residues 89–109 (TAQHFLYLTLAGAEFFLLGLM) form a helical membrane-spanning segment. The Cytoplasmic segment spans residues 110–130 (SCDRYVAICNPLHYPDLMSRK). A helical transmembrane segment spans residues 131–151 (ICWLIVAAAWLGGSIDGFLLT). Topologically, residues 152 to 188 (PVTMQFPFCASREINHFFCEVPALLKLSCTDTSAYET) are extracellular. A helical membrane pass occupies residues 189–209 (AMYVCCIMMLLIPFSVISGSY). At 210–235 (TRILITVYRMSEAEGRRKAVATCSSH) the chain is on the cytoplasmic side. A helical membrane pass occupies residues 236-256 (MVVVSLFYGAAMYTYVLPHSY). The Extracellular segment spans residues 257-262 (HTPEQD). The helical transmembrane segment at 263 to 283 (KAVSAFYTILTPMLNPLIYSL) threads the bilayer. The Cytoplasmic segment spans residues 284–308 (RNKDVTGALQKVVGRCVSSGKVTTF).

It belongs to the G-protein coupled receptor 1 family.

The protein localises to the cell membrane. Its function is as follows. Odorant receptor. This is Olfactory receptor 2T7 (OR2T7) from Homo sapiens (Human).